We begin with the raw amino-acid sequence, 377 residues long: Lipoyl synthase, mitochondrial (377 aa).

[4Fe-4S] cluster-binding residues include C98, C103, C109, C128, C132, C135, and S343. The 220-residue stretch at 113–332 (KKSEATATIM…RDTALDMGFL (220 aa)) folds into the Radical SAM core domain.

The protein belongs to the radical SAM superfamily. Lipoyl synthase family. It depends on [4Fe-4S] cluster as a cofactor.

It localises to the mitochondrion. It carries out the reaction [[Fe-S] cluster scaffold protein carrying a second [4Fe-4S](2+) cluster] + N(6)-octanoyl-L-lysyl-[protein] + 2 oxidized [2Fe-2S]-[ferredoxin] + 2 S-adenosyl-L-methionine + 4 H(+) = [[Fe-S] cluster scaffold protein] + N(6)-[(R)-dihydrolipoyl]-L-lysyl-[protein] + 4 Fe(3+) + 2 hydrogen sulfide + 2 5'-deoxyadenosine + 2 L-methionine + 2 reduced [2Fe-2S]-[ferredoxin]. Its pathway is protein modification; protein lipoylation via endogenous pathway; protein N(6)-(lipoyl)lysine from octanoyl-[acyl-carrier-protein]: step 2/2. Functionally, catalyzes the radical-mediated insertion of two sulfur atoms into the C-6 and C-8 positions of the octanoyl moiety bound to the lipoyl domains of lipoate-dependent enzymes, thereby converting the octanoylated domains into lipoylated derivatives. The sequence is that of Lipoyl synthase, mitochondrial from Candida tropicalis (strain ATCC MYA-3404 / T1) (Yeast).